A 615-amino-acid polypeptide reads, in one-letter code: Alpha-terpinene synthase TPS33PK, chloroplastic (615 aa).

The transit peptide at Met-1 to Tyr-33 directs the protein to the chloroplast. (2E)-geranyl diphosphate contacts are provided by Glu-334, Val-371, Leu-375, Leu-513, and Ser-516. Residues Val-371 and Leu-375 each contribute to the Mg(2+) site. The DDXXD motif signature appears at Val-371–Leu-375. Residues Ser-516, Met-520, and Asp-524 each coordinate Mg(2+).

This sequence belongs to the terpene synthase family. Tpsb subfamily. Requires Mg(2+) as cofactor. The cofactor is Mn(2+).

It localises to the plastid. The protein resides in the chloroplast. The catalysed reaction is (2E)-geranyl diphosphate = alpha-terpinene + diphosphate. It carries out the reaction (2E)-geranyl diphosphate = gamma-terpinene + diphosphate. It participates in secondary metabolite biosynthesis; terpenoid biosynthesis. Its function is as follows. Involved in monoterpene (C10) olefins biosynthesis, constituants of cannabinoids and terpenoids-rich resins. Catalyzes mainly the conversion of (2E)-geranyl diphosphate to alpha-terpinene and gamma-terpinene. This chain is Alpha-terpinene synthase TPS33PK, chloroplastic, found in Cannabis sativa (Hemp).